An 89-amino-acid polypeptide reads, in one-letter code: Small ribosomal subunit protein uS15 (89 aa).

It belongs to the universal ribosomal protein uS15 family. In terms of assembly, part of the 30S ribosomal subunit. Forms a bridge to the 50S subunit in the 70S ribosome, contacting the 23S rRNA.

In terms of biological role, one of the primary rRNA binding proteins, it binds directly to 16S rRNA where it helps nucleate assembly of the platform of the 30S subunit by binding and bridging several RNA helices of the 16S rRNA. Forms an intersubunit bridge (bridge B4) with the 23S rRNA of the 50S subunit in the ribosome. This Desulfatibacillum aliphaticivorans protein is Small ribosomal subunit protein uS15.